Here is a 210-residue protein sequence, read N- to C-terminus: Orotate phosphoribosyltransferase (210 aa).

5-phospho-alpha-D-ribose 1-diphosphate contacts are provided by residues arginine 96, lysine 100, histidine 102, and 122–130; that span reads DDLISTGGS. Serine 126 is an orotate binding site.

Belongs to the purine/pyrimidine phosphoribosyltransferase family. PyrE subfamily. Homodimer. Requires Mg(2+) as cofactor.

It catalyses the reaction orotidine 5'-phosphate + diphosphate = orotate + 5-phospho-alpha-D-ribose 1-diphosphate. The protein operates within pyrimidine metabolism; UMP biosynthesis via de novo pathway; UMP from orotate: step 1/2. In terms of biological role, catalyzes the transfer of a ribosyl phosphate group from 5-phosphoribose 1-diphosphate to orotate, leading to the formation of orotidine monophosphate (OMP). The protein is Orotate phosphoribosyltransferase of Levilactobacillus brevis (strain ATCC 367 / BCRC 12310 / CIP 105137 / JCM 1170 / LMG 11437 / NCIMB 947 / NCTC 947) (Lactobacillus brevis).